The primary structure comprises 482 residues: Proton extrusion protein PxcA (482 aa).

The next 4 helical transmembrane spans lie at 265-285 (FVLG…NLVI), 359-379 (PLKN…YFVL), 406-426 (IIIL…WEVI), and 442-462 (FINM…KYWI).

The protein belongs to the CemA family.

The protein localises to the cell inner membrane. Required for H(+) efflux immediately after light irradiation to form a rapid H(+) concentration gradient across the thylakoid membranes. Together with PxcL, contributes to transient H(+) uptake following dark to light transition. This Acaryochloris marina (strain MBIC 11017) protein is Proton extrusion protein PxcA.